A 32-amino-acid chain; its full sequence is ATP synthase 28 kDa subunit, mitochondrial (32 aa).

The protein resides in the mitochondrion. Its subcellular location is the mitochondrion inner membrane. Functionally, mitochondrial membrane ATP synthase (F(1)F(0) ATP synthase or Complex V) produces ATP from ADP in the presence of a proton gradient across the membrane which is generated by electron transport complexes of the respiratory chain. F-type ATPases consist of two structural domains, F(1) - containing the extramembraneous catalytic core and F(0) - containing the membrane proton channel, linked together by a central stalk and a peripheral stalk. During catalysis, ATP synthesis in the catalytic domain of F(1) is coupled via a rotary mechanism of the central stalk subunits to proton translocation. Part of the complex F(0) domain. The protein is ATP synthase 28 kDa subunit, mitochondrial of Spinacia oleracea (Spinach).